An 804-amino-acid chain; its full sequence is Elongation factor G, mitochondrial (804 aa).

Residues 1–9 constitute a mitochondrion transit peptide; sequence MVRPAQVRA. Residues 103–389 enclose the tr-type G domain; it reads SKVRNIGIAA…GVCDYLPNPS (287 aa). GTP-binding positions include 112–119, 187–191, and 241–244; these read AHIDSGKT, DTPGH, and NKMD.

Belongs to the TRAFAC class translation factor GTPase superfamily. Classic translation factor GTPase family. EF-G/EF-2 subfamily.

It is found in the mitochondrion. It participates in protein biosynthesis; polypeptide chain elongation. Its function is as follows. Mitochondrial GTPase that catalyzes the GTP-dependent ribosomal translocation step during translation elongation. During this step, the ribosome changes from the pre-translocational (PRE) to the post-translocational (POST) state as the newly formed A-site-bound peptidyl-tRNA and P-site-bound deacylated tRNA move to the P and E sites, respectively. Catalyzes the coordinated movement of the two tRNA molecules, the mRNA and conformational changes in the ribosome. This Talaromyces stipitatus (strain ATCC 10500 / CBS 375.48 / QM 6759 / NRRL 1006) (Penicillium stipitatum) protein is Elongation factor G, mitochondrial (mef1).